We begin with the raw amino-acid sequence, 441 residues long: Ribosomal protein uS12 methylthiotransferase RimO (441 aa).

Positions 8-118 (PKIGFVSLGC…VLQHVHHYVP (111 aa)) constitute an MTTase N-terminal domain. [4Fe-4S] cluster contacts are provided by cysteine 17, cysteine 53, cysteine 82, cysteine 150, cysteine 154, and cysteine 157. In terms of domain architecture, Radical SAM core spans 136–373 (LTPRHYAYLK…MALQQQISAE (238 aa)). Residues 376 to 441 (QEKVGREILV…DEYDLWGSLV (66 aa)) form the TRAM domain.

Belongs to the methylthiotransferase family. RimO subfamily. [4Fe-4S] cluster is required as a cofactor.

Its subcellular location is the cytoplasm. It carries out the reaction L-aspartate(89)-[ribosomal protein uS12]-hydrogen + (sulfur carrier)-SH + AH2 + 2 S-adenosyl-L-methionine = 3-methylsulfanyl-L-aspartate(89)-[ribosomal protein uS12]-hydrogen + (sulfur carrier)-H + 5'-deoxyadenosine + L-methionine + A + S-adenosyl-L-homocysteine + 2 H(+). Functionally, catalyzes the methylthiolation of an aspartic acid residue of ribosomal protein uS12. The chain is Ribosomal protein uS12 methylthiotransferase RimO from Cronobacter sakazakii (strain ATCC BAA-894) (Enterobacter sakazakii).